Reading from the N-terminus, the 82-residue chain is Small ribosomal subunit protein bS16 (82 aa).

The protein belongs to the bacterial ribosomal protein bS16 family.

The polypeptide is Small ribosomal subunit protein bS16 (Bdellovibrio bacteriovorus (strain ATCC 15356 / DSM 50701 / NCIMB 9529 / HD100)).